The primary structure comprises 1159 residues: Reverse gyrase 2 (1159 aa).

The RG N-terminal-type zinc-finger motif lies at 1–40; the sequence is MALELIERGCPNCGGVISSDRLEKGLPCSKCLPKPTEEKV. Zn(2+) contacts are provided by C10, C13, C28, and C31. Residues Q82 and 99 to 106 contribute to the ATP site; that span reads APTGVGKT. The region spanning 86–275 is the Helicase ATP-binding domain; it reads AKRVFMNQSF…LFRNLLGFDV (190 aa). Positions 196–199 match the DEAD box motif; sequence DDID. The topoisomerase I stretch occupies residues 583–1159; sequence DLFKTTLVIV…LLKEEKAFKK (577 aa). Residues 587 to 743 form the Toprim domain; sequence TTLVIVESPN…NIKRAEFHEV (157 aa). Positions 593 and 712 each coordinate Mg(2+). The 394-residue stretch at 759–1152 folds into the Topo IA-type catalytic domain; that stretch reads DLNLVKAQLV…EVHRIKVLLK (394 aa). The active-site O-(5'-phospho-DNA)-tyrosine intermediate is Y902.

It in the N-terminal section; belongs to the DEAD box helicase family. DDVD subfamily. The protein in the C-terminal section; belongs to the type IA topoisomerase family. In terms of assembly, monomer. Requires Zn(2+) as cofactor. Mg(2+) is required as a cofactor.

Its subcellular location is the cytoplasm. The catalysed reaction is ATP + H2O = ADP + phosphate + H(+). Modifies the topological state of DNA by introducing positive supercoils in an ATP-dependent process, increasing the linking number in steps of +1. Binds to single-stranded DNA, transiently cleaves and then rejoins the ends, introducing a positive supercoil in the process. The scissile phosphodiester is attacked by the catalytic tyrosine of the enzyme, resulting in the formation of a DNA-(5'-phosphotyrosyl)-enzyme intermediate. Probably involved in rewinding DNA strands in regions of the chromosome that have opened up to allow replication, transcription, DNA repair and/or for DNA protection. In Aquifex aeolicus (strain VF5), this protein is Reverse gyrase 2.